A 135-amino-acid chain; its full sequence is uncharacterized protein (135 aa).

Residues 68-135 (DEVDNYIRVF…KKESEDEDEL (68 aa)) adopt a coiled-coil conformation. The interval 88 to 135 (EKIVGKPPKSTSAPDIDELEEEPDEETEEKSEEKTEKKKKESEDEDEL) is disordered. The segment covering 102 to 117 (DIDELEEEPDEETEEK) has biased composition (acidic residues). Over residues 118-129 (SEEKTEKKKKES) the composition is skewed to basic and acidic residues.

This is an uncharacterized protein from Acidianus hospitalis (AFV-1).